The primary structure comprises 920 residues: Alpha-L-rhamnosidase (920 aa).

Positions 1–19 are cleaved as a signal peptide; it reads MCVVRTFWFAVLTVIFAVS. Residue Cys-20 is the site of N-palmitoyl cysteine attachment. Cys-20 carries the S-diacylglycerol cysteine lipid modification. Alpha-L-rhamnose contacts are provided by residues Asp-500, 504–506, Asp-513, and Trp-565; that span reads RDE. The active-site Proton donor is Glu-506. Residue Glu-779 is the Proton acceptor of the active site. His-800 is a binding site for alpha-L-rhamnose.

It belongs to the glycosyl hydrolase 78 family.

It is found in the cell membrane. It carries out the reaction Hydrolysis of terminal non-reducing alpha-L-rhamnose residues in alpha-L-rhamnosides.. Its function is as follows. Alpha-L-rhamnosidase involved in ulvan degradation. Ulvan is the main polysaccharide component of the Ulvales (green seaweed) cell wall. It is composed of disaccharide building blocks comprising 3-sulfated rhamnose (Rha3S) linked to D-glucuronic acid (GlcA), L-iduronic acid (IduA), or D-xylose (Xyl). The enzyme is able to degrade p-nitrophenyl-alpha-L-rhamnopyranoside (PNP-Rha) in vitro. Incubating the enzyme with the products obtained after degradation with ulvan lyase and beta-glucuronyl hydrolase (i.e. the trisaccharides beta-alpha-L-Rha3S-IduA-Rha3S and beta-alpha-L-Rha3S-GlcA-Rha3S) showed no degradation, suggesting that the enzyme is active on neutral rhamnose and that desulfation of the oligosaccharide must be achieved before cleavage of rhamnose. The sequence is that of Alpha-L-rhamnosidase from Alteromonas sp. (strain LOR).